Reading from the N-terminus, the 276-residue chain is MPVRPVLKIVKGQPTSDGAGVRLTRMLGTPEAQMFDPFLMLDCFDNDQASDYLGGFPDHPHRGFETVTYMLEGRMRHKDNTGREGVIGPGGIQWMRAGKGIVHSEMPEQDQGRMRGFQLWVNLPARLKMSAPGYQEFETDSIPVEARDGGVTVKVISGATETGTAGPIGGGAVDALYFDVALPAGTVFEEPVGDDRNAMLAVYEGKVRVAHDTVDALSGVFLGRGDTVRVEAVTDARVLLLAGRPIGEPVFWHGPFVMDTREGLMQAFDDFQRGRF.

This sequence belongs to the pirin family.

This is Pirin-like protein CC_0481 from Caulobacter vibrioides (strain ATCC 19089 / CIP 103742 / CB 15) (Caulobacter crescentus).